Reading from the N-terminus, the 161-residue chain is Small heat shock protein hspJ (161 aa).

Positions 52 to 161 constitute a sHSP domain; sequence SKFTSLNPKL…FEKEIKINIE (110 aa).

This sequence belongs to the small heat shock protein (HSP20) family.

This is Small heat shock protein hspJ (hspJ) from Dictyostelium discoideum (Social amoeba).